A 330-amino-acid polypeptide reads, in one-letter code: Probable deoxyhypusine synthase (330 aa).

Catalysis depends on Lys303, which acts as the Nucleophile.

Belongs to the deoxyhypusine synthase family. Requires NAD(+) as cofactor.

The catalysed reaction is [eIF5A protein]-L-lysine + spermidine = [eIF5A protein]-deoxyhypusine + propane-1,3-diamine. It functions in the pathway protein modification; eIF5A hypusination. Catalyzes the NAD-dependent oxidative cleavage of spermidine and the subsequent transfer of the butylamine moiety of spermidine to the epsilon-amino group of a specific lysine residue of the eIF-5A precursor protein to form the intermediate deoxyhypusine residue. The protein is Probable deoxyhypusine synthase (dys) of Methanocaldococcus jannaschii (strain ATCC 43067 / DSM 2661 / JAL-1 / JCM 10045 / NBRC 100440) (Methanococcus jannaschii).